The following is a 150-amino-acid chain: Globin (150 aa).

Residues 11-150 enclose the Globin domain; it reads PLSAAEKTKI…MICILLRSAY (140 aa). Heme b is bound by residues His-74 and His-106.

Belongs to the globin family. In terms of assembly, monomer.

In Lampetra fluviatilis (European river lamprey), this protein is Globin.